Consider the following 755-residue polypeptide: ABC transporter G family member 2 (755 aa).

One can recognise an ABC transporter domain in the interval 98–358 (LSFTDLTYSV…FSEFKHPIPE (261 aa)). 151-158 (GASGSGKS) provides a ligand contact to ATP. One can recognise an ABC transmembrane type-2 domain in the interval 449-659 (IEMIVIGKRA…PYEGVLQNEF (211 aa)). 6 consecutive transmembrane segments (helical) span residues 468–488 (LLGMRLGAVMVTGIILATMFT), 503–523 (FFAFAMSTTFYTCAEAIPVFL), 552–572 (IPALIVLSASFAATTFWAVGL), 579–599 (FFFFYFTILASFWAGSSFVTF), 609–629 (LGFTVVVAILAYFLLFSGFFI), and 728–748 (LWITVAWGFFFRVLFYFTLLI).

Belongs to the ABC transporter superfamily. ABCG family. Eye pigment precursor importer (TC 3.A.1.204) subfamily.

The protein localises to the membrane. The protein is ABC transporter G family member 2 (ABCG2) of Arabidopsis thaliana (Mouse-ear cress).